Here is a 391-residue protein sequence, read N- to C-terminus: 3-ketoacyl-CoA thiolase (391 aa).

Cys-95 functions as the Acyl-thioester intermediate in the catalytic mechanism. Residues His-347 and Cys-377 each act as proton acceptor in the active site.

It belongs to the thiolase-like superfamily. Thiolase family. In terms of assembly, heterotetramer of two alpha chains (FadB) and two beta chains (FadA).

It is found in the cytoplasm. It catalyses the reaction an acyl-CoA + acetyl-CoA = a 3-oxoacyl-CoA + CoA. It participates in lipid metabolism; fatty acid beta-oxidation. In terms of biological role, catalyzes the final step of fatty acid oxidation in which acetyl-CoA is released and the CoA ester of a fatty acid two carbons shorter is formed. This Saccharophagus degradans (strain 2-40 / ATCC 43961 / DSM 17024) protein is 3-ketoacyl-CoA thiolase.